The chain runs to 463 residues: Type II NADH:quinone oxidoreductase Ndh (463 aa).

FAD is bound by residues 21–25 and Val-89; that span reads GSGFG. The active site involves Glu-184. Residues Asp-322 and 333–334 each bind FAD; that span reads AQ. Residues 387–407 form a helical membrane-spanning segment; that stretch reads FSGFIAWLIWLVLHLAYLIGF.

This sequence belongs to the NADH dehydrogenase family. FAD serves as cofactor.

It is found in the cell inner membrane. It catalyses the reaction a quinone + NADH + H(+) = a quinol + NAD(+). The enzyme catalyses a menaquinone + NADH + H(+) = a menaquinol + NAD(+). The catalysed reaction is a ubiquinone + NADH + H(+) = a ubiquinol + NAD(+). Its activity is regulated as follows. Inhibited by phenothiazine analogs. Inhibited by 2-mercapto-quinazolinones. Not inhibited by classic inhibitors of type I NADH dehydrogenase, such as rotenone, piericidin A and pyridaben. Functionally, alternative, nonproton pumping NADH:quinone oxidoreductase that delivers electrons to the respiratory chain by oxidation of NADH and reduction of quinones. Ndh is probably the main NADH dehydrogenase of M.tuberculosis. The polypeptide is Type II NADH:quinone oxidoreductase Ndh (Mycobacterium tuberculosis (strain ATCC 25618 / H37Rv)).